A 386-amino-acid chain; its full sequence is Succinate--CoA ligase [ADP-forming] subunit beta (386 aa).

The region spanning 9 to 244 (KALLRAAGIK…TTQEDHRETQ (236 aa)) is the ATP-grasp domain. Residues Lys-46, 53-55 (GRG), Glu-100, and Arg-103 contribute to the ATP site. Mg(2+) is bound by residues Asn-199 and Asp-213. Substrate is bound by residues Asn-264 and 321 to 323 (GIV).

Belongs to the succinate/malate CoA ligase beta subunit family. In terms of assembly, heterotetramer of two alpha and two beta subunits. Requires Mg(2+) as cofactor.

It catalyses the reaction succinate + ATP + CoA = succinyl-CoA + ADP + phosphate. The catalysed reaction is GTP + succinate + CoA = succinyl-CoA + GDP + phosphate. It functions in the pathway carbohydrate metabolism; tricarboxylic acid cycle; succinate from succinyl-CoA (ligase route): step 1/1. Functionally, succinyl-CoA synthetase functions in the citric acid cycle (TCA), coupling the hydrolysis of succinyl-CoA to the synthesis of either ATP or GTP and thus represents the only step of substrate-level phosphorylation in the TCA. The beta subunit provides nucleotide specificity of the enzyme and binds the substrate succinate, while the binding sites for coenzyme A and phosphate are found in the alpha subunit. The sequence is that of Succinate--CoA ligase [ADP-forming] subunit beta from Dichelobacter nodosus (strain VCS1703A).